We begin with the raw amino-acid sequence, 118 residues long: MARIAGINIPDQKHSVIALTAIYGIGKTRSKAVLAEAGIAESVKISELSEEQIDLLREGVAKYTVEGDLRREVSMNIKRLMDLGCYRGIRHRRSLPLRGQRTKTNARTRKGPRKPIKR.

The segment at 94–118 (SLPLRGQRTKTNARTRKGPRKPIKR) is disordered.

It belongs to the universal ribosomal protein uS13 family. Part of the 30S ribosomal subunit. Forms a loose heterodimer with protein S19. Forms two bridges to the 50S subunit in the 70S ribosome.

Functionally, located at the top of the head of the 30S subunit, it contacts several helices of the 16S rRNA. In the 70S ribosome it contacts the 23S rRNA (bridge B1a) and protein L5 of the 50S subunit (bridge B1b), connecting the 2 subunits; these bridges are implicated in subunit movement. Contacts the tRNAs in the A and P-sites. This chain is Small ribosomal subunit protein uS13, found in Photobacterium profundum (strain SS9).